The sequence spans 177 residues: N-acetylmuramoyl-L-alanine amidase A (177 aa).

The N-acetylmuramoyl-L-alanine amidase domain maps to 23 to 158 (QTSAVIMHTM…SGNENRYDPG (136 aa)). An intrachain disulfide couples cysteine 114 to cysteine 121.

It is found in the secreted. The enzyme catalyses Hydrolyzes the link between N-acetylmuramoyl residues and L-amino acid residues in certain cell-wall glycopeptides.. In terms of biological role, antibacterial activity against Gram-positive bacteria M.luteus, S.aureus, E.faecalis and P.acidilactici and Gram-negative bacterium E.coli. This chain is N-acetylmuramoyl-L-alanine amidase A (cwhA), found in Achromobacter lyticus.